The primary structure comprises 409 residues: Phosphoglycerate kinase (409 aa).

Substrate-binding positions include 22–24 (DLN), Arg-37, 60–63 (HLSR), Arg-122, and Arg-164. ATP is bound by residues Lys-215, Glu-338, and 365 to 368 (GGDS).

It belongs to the phosphoglycerate kinase family. In terms of assembly, monomer.

It is found in the cytoplasm. It carries out the reaction (2R)-3-phosphoglycerate + ATP = (2R)-3-phospho-glyceroyl phosphate + ADP. Its pathway is carbohydrate degradation; glycolysis; pyruvate from D-glyceraldehyde 3-phosphate: step 2/5. The sequence is that of Phosphoglycerate kinase (pgk) from Mycoplasma pneumoniae (strain ATCC 29342 / M129 / Subtype 1) (Mycoplasmoides pneumoniae).